The primary structure comprises 405 residues: Divinyl chlorophyllide a 8-vinyl-reductase, chloroplastic (405 aa).

Residues 1–58 (MAALLLSSHLTAASSSSTTSPTARPAPSFVSFRAANAAPKGARRGWPFLASSVEPPPA) constitute a chloroplast transit peptide.

The protein localises to the plastid. The protein resides in the chloroplast. It catalyses the reaction protochlorophyllide a + NADP(+) = 3,8-divinyl protochlorophyllide a + NADPH + H(+). The protein operates within porphyrin-containing compound metabolism; chlorophyll biosynthesis. Functionally, catalyzes the conversion of divinyl chlorophyllide to monovinyl chlorophyllide. Reduces the 8-vinyl group of the tetrapyrrole to an ethyl group using NADPH as the reductant. Can use (3,8-divinyl)-chlorophyllide a (DV-Chlidea) &gt; (3,8-divinyl)-chlorophyll a (DV-Chla) &gt; (3,8-divinyl)-protochlorophyllide a (DV-Pchlidea) &gt; (3,8-divinyl)-magnesium-protoporphyrin IX monomethyl ester (DV-MPE) &gt; (3,8-divinyl)-magnesium-protoporphyrin IX (DV-Mg-Proto) as substrates. The sequence is that of Divinyl chlorophyllide a 8-vinyl-reductase, chloroplastic (DVR) from Oryza sativa subsp. indica (Rice).